Reading from the N-terminus, the 278-residue chain is Achaete-scute homolog 5 (278 aa).

The interval M1–G66 is disordered. Residues A155 to L207 form the bHLH domain. The segment at A214–H278 is disordered. Residues G230–P239 show a composition bias toward pro residues. Residues R240–A249 are compositionally biased toward basic and acidic residues. The span at P252–L271 shows a compositional bias: low complexity.

In terms of assembly, interacts with transcription factor TCF3/E12.

It localises to the nucleus. Transcription factor. Probably binds E-box motifs 5'-CANNTG-3' in complex with transcription factor TCF3/E12. Negatively modulates transcription of target genes such as CDH1/E-cadherin, perhaps by recruiting the PRC2 repressive complex to regulatory elements. Regulates ameloblast development and tooth germ growth, perhaps acting by positively modulating migration of inner enamel epithelium (IEE) cells. Plays a role in enamel formation. The protein is Achaete-scute homolog 5 (ASCL5) of Homo sapiens (Human).